The sequence spans 772 residues: RNA exonuclease 5 (772 aa).

A compositionally biased stretch (basic and acidic residues) spans 1–10 (MEPEREGTER). The segment at 1 to 26 (MEPEREGTERHPRKVRKRRQAPNKLV) is disordered. Residues 11 to 21 (HPRKVRKRRQA) are compositionally biased toward basic residues. One can recognise an Exonuclease domain in the interval 228–376 (LFGLDCEMCL…EDARIILELA (149 aa)). RRM domains lie at 505 to 579 (STVY…RPVT) and 600 to 679 (GSIY…RHLH).

This is RNA exonuclease 5 (REXO5) from Macaca fascicularis (Crab-eating macaque).